We begin with the raw amino-acid sequence, 436 residues long: Adenylosuccinate synthetase (436 aa).

GTP is bound by residues 12-18 and 40-42; these read GDEGKGK and GHT. The active-site Proton acceptor is Asp-13. Positions 13 and 40 each coordinate Mg(2+). IMP contacts are provided by residues 13 to 16, 38 to 41, Thr-128, Arg-142, Gln-223, Thr-238, and Arg-302; these read DEGK and NAGH. Catalysis depends on His-41, which acts as the Proton donor. 298–304 lines the substrate pocket; that stretch reads TTTGRRR. GTP-binding positions include Arg-304, 330–332, and 412–414; these read KLD and SLG.

This sequence belongs to the adenylosuccinate synthetase family. In terms of assembly, homodimer. The cofactor is Mg(2+).

It localises to the cytoplasm. The enzyme catalyses IMP + L-aspartate + GTP = N(6)-(1,2-dicarboxyethyl)-AMP + GDP + phosphate + 2 H(+). Its pathway is purine metabolism; AMP biosynthesis via de novo pathway; AMP from IMP: step 1/2. Its function is as follows. Plays an important role in the de novo pathway of purine nucleotide biosynthesis. Catalyzes the first committed step in the biosynthesis of AMP from IMP. This is Adenylosuccinate synthetase from Prochlorococcus marinus (strain MIT 9215).